Reading from the N-terminus, the 338-residue chain is Ketol-acid reductoisomerase (NADP(+)) (338 aa).

The KARI N-terminal Rossmann domain maps to 1-181; sequence MQIYYDKDAD…GGGRAGIIET (181 aa). Residues 24-27, Arg-47, Ser-50, Ser-52, and 82-85 each bind NADP(+); these read YGSQ and DEHQ. His-107 is a catalytic residue. Gly-133 serves as a coordination point for NADP(+). Positions 182–327 constitute a KARI C-terminal knotted domain; it reads TFREETETDL…ARLRDMMPWI (146 aa). Residues Asp-190, Glu-194, Glu-226, and Glu-230 each coordinate Mg(2+). Position 251 (Ser-251) interacts with substrate.

It belongs to the ketol-acid reductoisomerase family. Mg(2+) serves as cofactor.

The catalysed reaction is (2R)-2,3-dihydroxy-3-methylbutanoate + NADP(+) = (2S)-2-acetolactate + NADPH + H(+). It carries out the reaction (2R,3R)-2,3-dihydroxy-3-methylpentanoate + NADP(+) = (S)-2-ethyl-2-hydroxy-3-oxobutanoate + NADPH + H(+). The protein operates within amino-acid biosynthesis; L-isoleucine biosynthesis; L-isoleucine from 2-oxobutanoate: step 2/4. It participates in amino-acid biosynthesis; L-valine biosynthesis; L-valine from pyruvate: step 2/4. Involved in the biosynthesis of branched-chain amino acids (BCAA). Catalyzes an alkyl-migration followed by a ketol-acid reduction of (S)-2-acetolactate (S2AL) to yield (R)-2,3-dihydroxy-isovalerate. In the isomerase reaction, S2AL is rearranged via a Mg-dependent methyl migration to produce 3-hydroxy-3-methyl-2-ketobutyrate (HMKB). In the reductase reaction, this 2-ketoacid undergoes a metal-dependent reduction by NADPH to yield (R)-2,3-dihydroxy-isovalerate. This Methylococcus capsulatus (strain ATCC 33009 / NCIMB 11132 / Bath) protein is Ketol-acid reductoisomerase (NADP(+)).